The primary structure comprises 117 residues: Large ribosomal subunit protein bL20c (117 aa).

It belongs to the bacterial ribosomal protein bL20 family.

The protein localises to the plastid. Its subcellular location is the chloroplast. Its function is as follows. Binds directly to 23S ribosomal RNA and is necessary for the in vitro assembly process of the 50S ribosomal subunit. It is not involved in the protein synthesizing functions of that subunit. The chain is Large ribosomal subunit protein bL20c from Chloranthus spicatus (Chulantree).